We begin with the raw amino-acid sequence, 378 residues long: Ribosomal RNA large subunit methyltransferase G (378 aa).

It belongs to the methyltransferase superfamily. RlmG family.

The protein resides in the cytoplasm. The catalysed reaction is guanosine(1835) in 23S rRNA + S-adenosyl-L-methionine = N(2)-methylguanosine(1835) in 23S rRNA + S-adenosyl-L-homocysteine + H(+). In terms of biological role, specifically methylates the guanine in position 1835 (m2G1835) of 23S rRNA. The polypeptide is Ribosomal RNA large subunit methyltransferase G (Salmonella agona (strain SL483)).